The chain runs to 63 residues: Ferredoxin (63 aa).

The 29-residue stretch at Trp-3 to Asp-31 folds into the 4Fe-4S ferredoxin-type domain. 3 residues coordinate [4Fe-4S] cluster: Cys-12, Asp-15, and Cys-18. Cys-22 and Cys-45 form a disulfide bridge. Cys-53 lines the [4Fe-4S] cluster pocket.

[4Fe-4S] cluster is required as a cofactor. The cofactor is [3Fe-4S] cluster.

Its function is as follows. Ferredoxins are iron-sulfur proteins that transfer electrons in a wide variety of metabolic reactions. The protein is Ferredoxin (fdxA) of Thermococcus kodakarensis (strain ATCC BAA-918 / JCM 12380 / KOD1) (Pyrococcus kodakaraensis (strain KOD1)).